Consider the following 232-residue polypeptide: Ribonuclease 3 (232 aa).

In terms of domain architecture, RNase III spans 9–131 (INLLQKKLGY…IIGGIFLDSN (123 aa)). Residue Glu-44 coordinates Mg(2+). Residue Asp-48 is part of the active site. Mg(2+) is bound by residues Asp-117 and Glu-120. The active site involves Glu-120. The DRBM domain occupies 158–228 (DPKTRLQEYL…AENALKFLIE (71 aa)).

This sequence belongs to the ribonuclease III family. In terms of assembly, homodimer. Mg(2+) serves as cofactor.

The protein localises to the cytoplasm. The enzyme catalyses Endonucleolytic cleavage to 5'-phosphomonoester.. Functionally, digests double-stranded RNA. Involved in the processing of primary rRNA transcript to yield the immediate precursors to the large and small rRNAs (23S and 16S). Processes some mRNAs, and tRNAs when they are encoded in the rRNA operon. Processes pre-crRNA and tracrRNA of type II CRISPR loci if present in the organism. The protein is Ribonuclease 3 of Blochmanniella floridana.